A 518-amino-acid chain; its full sequence is GMP synthase [glutamine-hydrolyzing] (518 aa).

One can recognise a Glutamine amidotransferase type-1 domain in the interval 13 to 203 (KIIVLDFGSQ…ALNICGCKGD (191 aa)). Cys90 (nucleophile) is an active-site residue. Residues His177 and Glu179 contribute to the active site. The GMPS ATP-PPase domain occupies 204–393 (WTMENFSEVE…LGMPDAIVWR (190 aa)). 231–237 (SGGVDSS) provides a ligand contact to ATP.

In terms of assembly, homodimer.

It catalyses the reaction XMP + L-glutamine + ATP + H2O = GMP + L-glutamate + AMP + diphosphate + 2 H(+). It participates in purine metabolism; GMP biosynthesis; GMP from XMP (L-Gln route): step 1/1. In terms of biological role, catalyzes the synthesis of GMP from XMP. The chain is GMP synthase [glutamine-hydrolyzing] from Listeria innocua serovar 6a (strain ATCC BAA-680 / CLIP 11262).